The primary structure comprises 188 residues: Elongation factor P (188 aa).

The protein belongs to the elongation factor P family.

The protein localises to the cytoplasm. The protein operates within protein biosynthesis; polypeptide chain elongation. Its function is as follows. Involved in peptide bond synthesis. Stimulates efficient translation and peptide-bond synthesis on native or reconstituted 70S ribosomes in vitro. Probably functions indirectly by altering the affinity of the ribosome for aminoacyl-tRNA, thus increasing their reactivity as acceptors for peptidyl transferase. In Caulobacter sp. (strain K31), this protein is Elongation factor P.